The chain runs to 90 residues: MARMVNCVLLGKEAEGLDFPPYPGELGKKIYEGVSKEAWQKWVKHQTMLINEYRLTPVDPKARKFLEEEMDKFFFSGGSTKPEGYVAPSK.

This sequence belongs to the Fe(2+)-trafficking protein family.

In terms of biological role, could be a mediator in iron transactions between iron acquisition and iron-requiring processes, such as synthesis and/or repair of Fe-S clusters in biosynthetic enzymes. The sequence is that of Probable Fe(2+)-trafficking protein from Thioalkalivibrio sulfidiphilus (strain HL-EbGR7).